Consider the following 494-residue polypeptide: Sugiol synthase (494 aa).

Residues 3 to 23 traverse the membrane as a helical segment; that stretch reads SFSLLAALFFISAATWFISSR. Cys-437 serves as a coordination point for heme.

This sequence belongs to the cytochrome P450 family. It depends on heme as a cofactor. Expressed in roots.

The protein resides in the membrane. It catalyses the reaction ferruginol + 2 reduced [NADPH--hemoprotein reductase] + 2 O2 = sugiol + 2 oxidized [NADPH--hemoprotein reductase] + 3 H2O + 2 H(+). The enzyme catalyses ferruginol + reduced [NADPH--hemoprotein reductase] + O2 = 11-hydroxyferruginol + oxidized [NADPH--hemoprotein reductase] + H2O + H(+). It carries out the reaction 11-hydroxyferruginol + 2 reduced [NADPH--hemoprotein reductase] + 2 O2 = 11-hydroxysugiol + 2 oxidized [NADPH--hemoprotein reductase] + 3 H2O + 2 H(+). Its pathway is secondary metabolite biosynthesis; terpenoid biosynthesis. Functionally, monooxygenase that oxidizes ferruginol to produce sugiol. Oxidizes ferruginol at C-12 to produce 11-hydroxyferruginol. Can oxidize 11-hydroxyferruginol to 11-hydroxysugiol. These products are intermediates in tanshinone biosynthesis. This Salvia miltiorrhiza (Chinese sage) protein is Sugiol synthase.